A 933-amino-acid chain; its full sequence is MSNESQVSEAPVNFGANLGYVLDLYDIYLDNPSAVPEDLQVLFSTIKNGEANIATNTEGQSNVTKGDSTIKRVMRLIDNIRQYGHLLADIYPVNRPQRENVPKLNMEDFNLDQETLESISAGIVSEHFKDIYDNAYEAIVRMEKRYKGPIAFEYTHINNNRERVWLKRRIETPYKATLNDNQKIELFKNLAHVEGFEKYLHKNFVGAKRFSIEGVDTLVPMLQQTLRIASDEGIQNIQIGMAHRGRLNVLTHVLEKPYEMMISEFMHIDPMKFLPEDGSLQLTSGWTGDVKYHLGGVKTTQSYGSEQRISLANNPSHLEIVAPVVLGKTRANQDTTDKPGAVTTEFKKSMPILIHGDAAYPGQGINFEAMNLGNLEGYSTGGSLHIITNNRIGFTTEPEDGRSTTYSSDVAKGYDVPIMHVNADNVEATIEAIEIAMAFRKEFNKDVVIDLVGYRRYGHNEMDEPSITNPLQYYEIRKHESVDILYGKQLVNENIISENQMNQIFDDVQNTLRAAHDKIDKNDKMDNPDMQKPDSLAEPIQTKDEEVSYEQLKEINDAMLSYPSDFNVLKKLNKVLEKRREPFESEDGLVDWAQAEQLAFATITQNGRPIRLTGQDSERGTFSHRHAVLHDPDTGAQYVPLHNVPDQKATFEVRNSPLSEAAVVGFEYGYNIQNKSCMTIWEAQYGDFSNMAQMIFDNFLFSSRAKWGERSGLTLFLPHSFEGQGPEHSSARLERFLQLAGENNSTIVNLSSSSNYFHLLRAQAANLGTQSMRPLVVMSPKSLLRNKTVADPISKFTSGKFEPILPEAHDKASVKKVILASGKMFIDLKEYLTKNPNKSILLVAVERLYPFPADEIDALLSELPNLEHVAWVQEEPKNQGAWSFVYPYLKELTTDKYDLSYHGRIQRSAPAEGDGEIHKLVQNMIIEQSTNIN.

It belongs to the alpha-ketoglutarate dehydrogenase family. In terms of assembly, homodimer. Part of the 2-oxoglutarate dehydrogenase (OGDH) complex composed of E1 (2-oxoglutarate dehydrogenase), E2 (dihydrolipoamide succinyltransferase) and E3 (dihydrolipoamide dehydrogenase); the complex contains multiple copies of the three enzymatic components (E1, E2 and E3). Thiamine diphosphate serves as cofactor.

It carries out the reaction N(6)-[(R)-lipoyl]-L-lysyl-[protein] + 2-oxoglutarate + H(+) = N(6)-[(R)-S(8)-succinyldihydrolipoyl]-L-lysyl-[protein] + CO2. E1 component of the 2-oxoglutarate dehydrogenase (OGDH) complex which catalyzes the decarboxylation of 2-oxoglutarate, the first step in the conversion of 2-oxoglutarate to succinyl-CoA and CO(2). In Staphylococcus saprophyticus subsp. saprophyticus (strain ATCC 15305 / DSM 20229 / NCIMB 8711 / NCTC 7292 / S-41), this protein is 2-oxoglutarate dehydrogenase E1 component.